The chain runs to 266 residues: Apolipoprotein A-I (266 aa).

Positions methionine 1–alanine 18 are cleaved as a signal peptide. 2 repeat units span residues leucine 67–glycine 88 and proline 89–serine 110. The tract at residues leucine 67–glutamine 266 is 10 X approximate tandem repeats. The residue at position 109 (methionine 109) is a Methionine sulfoxide. A 3; half-length repeat occupies lysine 111–glutamine 121. 5 consecutive repeat copies span residues proline 122 to alanine 143, proline 144 to threonine 165, proline 166 to alanine 187, proline 188 to serine 209, and alanine 210 to lysine 231. A 9; half-length repeat occupies proline 232–leucine 242. Repeat unit 10 spans residues proline 243–glutamine 266.

Belongs to the apolipoprotein A1/A4/E family. As to quaternary structure, homodimer. Interacts with APOA1BP and CLU. Component of a sperm activating protein complex (SPAP), consisting of APOA1, an immunoglobulin heavy chain, an immunoglobulin light chain and albumin. Interacts with NDRG1. Interacts with SCGB3A2. Interacts with NAXE and YJEFN3. Glycosylated. Post-translationally, palmitoylated. In terms of processing, phosphorylation sites are present in the extracellular medium.

The protein localises to the secreted. Participates in the reverse transport of cholesterol from tissues to the liver for excretion by promoting cholesterol efflux from tissues and by acting as a cofactor for the lecithin cholesterol acyltransferase (LCAT). As part of the SPAP complex, activates spermatozoa motility. The polypeptide is Apolipoprotein A-I (APOA1) (Mustela putorius furo (European domestic ferret)).